Here is a 430-residue protein sequence, read N- to C-terminus: Peptidoglycan DD-endopeptidase ShyA (430 aa).

Residues 1–35 (MISKSIILRFSELSMRKKATLVGLPLLAVAAISSS) form the signal peptide. 3 residues coordinate Zn(2+): histidine 297, aspartate 301, and histidine 378.

It belongs to the peptidase M23B family. Zn(2+) is required as a cofactor.

Its subcellular location is the periplasm. It functions in the pathway cell wall degradation; peptidoglycan degradation. With respect to regulation, reduced activity in 0.5 mM EDTA and a complete loss of activity at higher EDTA concentrations. The effect of EDTA can be reversed by addition of 1 mM ZnCl(2). Conformational switching between open (catalytically active) and closed (catalytically inactive) conformation of this protein is suggested mechanism of its regulation. The signal or inducer of the conformational shift to the open form unmasking the active site is currently not understood. Functionally, cell wall peptidoglycan (PG) DD-endopeptidase essential for cell growth and elongation. Hydrolyzes peptide cross-links which covalently connect adjacent PG strands probably to allow insertion of new glycans and thus cell wall expansion. Degrades purified whole PG sacculi in vitro. Releases predominantly short glycan chains from the PG. Cleaves D,D cross-linked muropeptides specifically preferring dimeric tetrapeptide-tetrapeptide (D44) substrates and has only little activity on dimeric tetrapeptide-pentapeptide (D45) substrates. Also converts more than 50% of tetrapeptide-tripeptide (D43) to product as well as more than 50% of D43M, which contains D-Met instead of D-Ala in the fourth position of the acceptor moiety. Cleaves the D,D bond between diaminopimelic acid (DAP) and D-Ala of the PG substrate in vitro. No cleavage of L,D bond connecting two DAP moieties. This chain is Peptidoglycan DD-endopeptidase ShyA, found in Vibrio cholerae serotype O1 (strain ATCC 39315 / El Tor Inaba N16961).